A 282-amino-acid chain; its full sequence is Protein N-terminal and lysine N-methyltransferase efm7 (282 aa).

Over residues 1-13 the composition is skewed to basic and acidic residues; the sequence is MSKPEEVVNHVPE. The tract at residues 1–32 is disordered; the sequence is MSKPEEVVNHVPEDEGSDIEAGGLFEDPPDFY. S-adenosyl-L-methionine is bound by residues tryptophan 67, 93–95, aspartate 115, tryptophan 152, and alanine 179; that span reads GAA.

This sequence belongs to the class I-like SAM-binding methyltransferase superfamily. EFM7 family.

The protein localises to the cytoplasm. S-adenosyl-L-methionine-dependent protein methyltransferase that trimethylates the N-terminal glycine 'Gly-2' of elongation factor 1-alpha, before also catalyzing the mono- and dimethylation of 'Lys-3'. In Neurospora crassa (strain ATCC 24698 / 74-OR23-1A / CBS 708.71 / DSM 1257 / FGSC 987), this protein is Protein N-terminal and lysine N-methyltransferase efm7 (nnt-1).